We begin with the raw amino-acid sequence, 131 residues long: C-C motif chemokine 21 (131 aa).

The signal sequence occupies residues 1–23 (MAQSLALSLLILVLAFGIPGTQG). Intrachain disulfides connect Cys-31–Cys-57, Cys-32–Cys-75, and Cys-103–Cys-119. Positions 89–131 (HLDKTPTPRKPVQGCRKDRGVPKNGKKGKGCKRTEQSQTPKGP) are disordered.

The protein belongs to the intercrine beta (chemokine CC) family. In terms of assembly, monomer. Binds to CCR7. Interacts with PDPN; relocalizes PDPN to the basolateral membrane. Interacts with TNFAIP6 (via Link domain). Interacts with GPR174.

Its subcellular location is the secreted. Inhibits hemopoiesis and stimulates chemotaxis. Chemotactic in vitro for thymocytes and activated T-cells, but not for B-cells, macrophages, or neutrophils. Shows preferential activity towards naive T-cells. May play a role in mediating homing of lymphocytes to secondary lymphoid organs. Binds to atypical chemokine receptor ACKR4 and mediates the recruitment of beta-arrestin (ARRB1/2) to ACKR4. The protein is C-C motif chemokine 21 (CCL21) of Macaca mulatta (Rhesus macaque).